The chain runs to 475 residues: Ankyrin repeat, SAM and basic leucine zipper domain-containing protein 1 (475 aa).

Positions 1-25 (MAASALRGLPVAGGGESSESEDDGW) are disordered. Phosphoserine is present on residues Ser-17, Ser-18, and Ser-20. ANK repeat units lie at residues 45–74 (EKKE…SVDS), 78–107 (YGWT…NASF), 110–144 (DKQS…DPNV), 148–177 (RLMT…EVNT), 181–210 (NGYT…NKML), and 214–243 (DGKM…PLEG). Positions 272-334 (SYTAFGDLEV…KILAALKELQ (63 aa)) constitute an SAM domain.

As to quaternary structure, interacts with DDX4, PIWIL1, RANBP9 and TDRD1.

The protein localises to the cytoplasm. Its function is as follows. Plays a central role during spermatogenesis by repressing transposable elements and preventing their mobilization, which is essential for the germline integrity. Acts via the piRNA metabolic process, which mediates the repression of transposable elements during meiosis by forming complexes composed of piRNAs and Piwi proteins and governs the methylation and subsequent repression of transposons. Its association with pi-bodies suggests a participation in the primary piRNAs metabolic process. Required prior to the pachytene stage to facilitate the production of multiple types of piRNAs, including those associated with repeats involved in the regulation of retrotransposons. May act by mediating protein-protein interactions during germ cell maturation. This is Ankyrin repeat, SAM and basic leucine zipper domain-containing protein 1 (ASZ1) from Pan troglodytes (Chimpanzee).